A 706-amino-acid polypeptide reads, in one-letter code: Fatty acid oxidation complex subunit alpha (706 aa).

The interval 1-188 is enoyl-CoA hydratase; sequence MDKSFTLNRL…KMGLVDDVVP (188 aa). Residues 308–706 form a 3-hydroxyacyl-CoA dehydrogenase region; sequence KAVNKVMVLG…MAESGSKFYE (399 aa).

The protein in the N-terminal section; belongs to the enoyl-CoA hydratase/isomerase family. This sequence in the central section; belongs to the 3-hydroxyacyl-CoA dehydrogenase family. As to quaternary structure, heterotetramer of two alpha chains (FadJ) and two beta chains (FadI).

The protein localises to the cytoplasm. It carries out the reaction a (3S)-3-hydroxyacyl-CoA = a (2E)-enoyl-CoA + H2O. The catalysed reaction is a 4-saturated-(3S)-3-hydroxyacyl-CoA = a (3E)-enoyl-CoA + H2O. The enzyme catalyses a (3S)-3-hydroxyacyl-CoA + NAD(+) = a 3-oxoacyl-CoA + NADH + H(+). It catalyses the reaction (3S)-3-hydroxybutanoyl-CoA = (3R)-3-hydroxybutanoyl-CoA. The protein operates within lipid metabolism; fatty acid beta-oxidation. Catalyzes the formation of a hydroxyacyl-CoA by addition of water on enoyl-CoA. Also exhibits 3-hydroxyacyl-CoA epimerase and 3-hydroxyacyl-CoA dehydrogenase activities. The protein is Fatty acid oxidation complex subunit alpha of Shewanella loihica (strain ATCC BAA-1088 / PV-4).